The primary structure comprises 365 residues: Chorismate synthase (365 aa).

Arg46 contributes to the NADP(+) binding site. FMN-binding positions include Arg124–Ser126, Gly284, Lys299–Ser303, and Arg326.

Belongs to the chorismate synthase family. Requires FMNH2 as cofactor.

It carries out the reaction 5-O-(1-carboxyvinyl)-3-phosphoshikimate = chorismate + phosphate. Its pathway is metabolic intermediate biosynthesis; chorismate biosynthesis; chorismate from D-erythrose 4-phosphate and phosphoenolpyruvate: step 7/7. Functionally, catalyzes the anti-1,4-elimination of the C-3 phosphate and the C-6 proR hydrogen from 5-enolpyruvylshikimate-3-phosphate (EPSP) to yield chorismate, which is the branch point compound that serves as the starting substrate for the three terminal pathways of aromatic amino acid biosynthesis. This reaction introduces a second double bond into the aromatic ring system. This Pyrobaculum islandicum (strain DSM 4184 / JCM 9189 / GEO3) protein is Chorismate synthase.